A 295-amino-acid polypeptide reads, in one-letter code: Bifunctional protein FolD (295 aa).

Residues 166–168 (GRS), Ser-191, and Ile-232 contribute to the NADP(+) site.

Belongs to the tetrahydrofolate dehydrogenase/cyclohydrolase family. In terms of assembly, homodimer.

It catalyses the reaction (6R)-5,10-methylene-5,6,7,8-tetrahydrofolate + NADP(+) = (6R)-5,10-methenyltetrahydrofolate + NADPH. The enzyme catalyses (6R)-5,10-methenyltetrahydrofolate + H2O = (6R)-10-formyltetrahydrofolate + H(+). Its pathway is one-carbon metabolism; tetrahydrofolate interconversion. Functionally, catalyzes the oxidation of 5,10-methylenetetrahydrofolate to 5,10-methenyltetrahydrofolate and then the hydrolysis of 5,10-methenyltetrahydrofolate to 10-formyltetrahydrofolate. The protein is Bifunctional protein FolD of Wolbachia pipientis subsp. Culex pipiens (strain wPip).